The following is a 623-amino-acid chain: Sodium-coupled monocarboxylate transporter 2 (623 aa).

Residues 1–10 (METVGRFQAG) lie on the Extracellular side of the membrane. A helical membrane pass occupies residues 11–31 (DYVVFACLFVVSSGIGVFFAI). Topologically, residues 32-50 (KERNKAPSKEFLVGGRQMS) are cytoplasmic. The helical transmembrane segment at 51–71 (CGPVALSLTASFMSAVTVIGA) threads the bilayer. Topologically, residues 72-83 (PADVYRFGASYV) are extracellular. Residues 84–104 (IFGVAYTFVVFFTAELFLPVF) traverse the membrane as a helical segment. The Cytoplasmic segment spans residues 105–129 (YRSGITSTYEYLELRFCKLVRVAAT). A helical transmembrane segment spans residues 130–150 (LIYIIQTILYTGVVVYAPALA). The Extracellular portion of the chain corresponds to 151-158 (LNQVTGFD). A helical membrane pass occupies residues 159-179 (LWGSIFATGIVCTFYCTLGGL). Over 180–181 (KA) the chain is Cytoplasmic. Residues 182-202 (VVWTDAFQMVVMVVGFLTVLI) form a helical membrane-spanning segment. Residues 203–236 (QGSSRAGGIENVWSTSRTGGRLQVFDFDVSPLRR) lie on the Extracellular side of the membrane. A helical membrane pass occupies residues 237–257 (HTFWTLSVGGTFTWLGIYGVN). At 258–276 (QSTIQRCISCKTEGHARWA) the chain is on the cytoplasmic side. The helical transmembrane segment at 277 to 297 (LYLNLLGLWIILFCAVVSGLI) threads the bilayer. Residues 298 to 322 (MYSYYSHCDPWSSGLISAPDQLMPY) lie on the Extracellular side of the membrane. A helical transmembrane segment spans residues 323-343 (FVMEILGAFPGLPGLFVACAF). The Cytoplasmic portion of the chain corresponds to 344-386 (SGTLSTVAASINALATVMYEDFVSQCFPDLSNRAASWISKALC). A helical membrane pass occupies residues 387–407 (VAFGVACTTMAVAASYMGGIV). The Extracellular portion of the chain corresponds to 408 to 412 (QAALS). The helical transmembrane segment at 413–433 (IHGMCGGPVLGLFSLGILFPF) threads the bilayer. The Cytoplasmic portion of the chain corresponds to 434 to 438 (TNLKG). The helical transmembrane segment at 439 to 459 (AVGGLIVGISLSFWVGVGAFI) threads the bilayer. At 460 to 510 (YPAPSNNTHALELNTAGCNITAAAFEPTSATVTQLTSDRNWLADSWYSMSY) the chain is on the extracellular side. 2 N-linked (GlcNAc...) asparagine glycosylation sites follow: Asn-465 and Asn-478. The chain crosses the membrane as a helical span at residues 511–531 (LYYSAVGFIGTVAAGLLITLL). Topologically, residues 532-623 (TGPMDPKLLK…NETSIVQKKL (92 aa)) are cytoplasmic.

The protein belongs to the sodium:solute symporter (SSF) (TC 2.A.21) family.

Its subcellular location is the apical cell membrane. It carries out the reaction (S)-lactate(out) + Na(+)(out) = (S)-lactate(in) + Na(+)(in). It catalyses the reaction nicotinate(out) + Na(+)(out) = nicotinate(in) + Na(+)(in). The catalysed reaction is pyruvate(out) + Na(+)(out) = pyruvate(in) + Na(+)(in). The enzyme catalyses propanoate(out) + Na(+)(out) = propanoate(in) + Na(+)(in). It carries out the reaction butanoate(out) + Na(+)(out) = butanoate(in) + Na(+)(in). It catalyses the reaction acetoacetate(out) + Na(+)(out) = acetoacetate(in) + Na(+)(in). Its function is as follows. Acts as an electroneutral and low-affinity sodium (Na(+))-dependent sodium-coupled solute transporter. Catalyzes the transport across the plasma membrane of many monocarboxylates such as lactate, pyruvate, nicotinate, propionate, butyrate and beta-D-hydroxybutyrate. The polypeptide is Sodium-coupled monocarboxylate transporter 2 (slc5a12) (Danio rerio (Zebrafish)).